The following is a 347-amino-acid chain: Holliday junction branch migration complex subunit RuvB (347 aa).

Positions M1 to Y180 are large ATPase domain (RuvB-L). ATP-binding positions include L19, R20, G61, K64, T65, T66, E127–F129, R170, Y180, and R217. T65 is a binding site for Mg(2+). Residues E181–E251 are small ATPAse domain (RuvB-S). Residues R254 to E347 are head domain (RuvB-H). Residues R290, R309, and R314 each coordinate DNA.

The protein belongs to the RuvB family. In terms of assembly, homohexamer. Forms an RuvA(8)-RuvB(12)-Holliday junction (HJ) complex. HJ DNA is sandwiched between 2 RuvA tetramers; dsDNA enters through RuvA and exits via RuvB. An RuvB hexamer assembles on each DNA strand where it exits the tetramer. Each RuvB hexamer is contacted by two RuvA subunits (via domain III) on 2 adjacent RuvB subunits; this complex drives branch migration. In the full resolvosome a probable DNA-RuvA(4)-RuvB(12)-RuvC(2) complex forms which resolves the HJ.

The protein resides in the cytoplasm. The enzyme catalyses ATP + H2O = ADP + phosphate + H(+). Functionally, the RuvA-RuvB-RuvC complex processes Holliday junction (HJ) DNA during genetic recombination and DNA repair, while the RuvA-RuvB complex plays an important role in the rescue of blocked DNA replication forks via replication fork reversal (RFR). RuvA specifically binds to HJ cruciform DNA, conferring on it an open structure. The RuvB hexamer acts as an ATP-dependent pump, pulling dsDNA into and through the RuvAB complex. RuvB forms 2 homohexamers on either side of HJ DNA bound by 1 or 2 RuvA tetramers; 4 subunits per hexamer contact DNA at a time. Coordinated motions by a converter formed by DNA-disengaged RuvB subunits stimulates ATP hydrolysis and nucleotide exchange. Immobilization of the converter enables RuvB to convert the ATP-contained energy into a lever motion, pulling 2 nucleotides of DNA out of the RuvA tetramer per ATP hydrolyzed, thus driving DNA branch migration. The RuvB motors rotate together with the DNA substrate, which together with the progressing nucleotide cycle form the mechanistic basis for DNA recombination by continuous HJ branch migration. Branch migration allows RuvC to scan DNA until it finds its consensus sequence, where it cleaves and resolves cruciform DNA. The chain is Holliday junction branch migration complex subunit RuvB from Paramagnetospirillum magneticum (strain ATCC 700264 / AMB-1) (Magnetospirillum magneticum).